We begin with the raw amino-acid sequence, 865 residues long: General transcription factor 3C polypeptide 5 (865 aa).

5 disordered regions span residues 1–21, 111–163, 191–215, 391–522, and 669–865; these read MNDE…NNNS, RPNK…NEKF, NNNT…TVPI, QDNH…NKEG, and DNKM…EESE. 5 stretches are compositionally biased toward low complexity: residues 7–21, 115–126, 140–158, 199–210, and 401–411; these read KNNS…NNNS, QQTQTQTQTQTQ, QSPK…QQPQ, DNVNDSSSSSSS, and SKNNNNNNNNK. Composition is skewed to basic and acidic residues over residues 412–439 and 448–489; these read DSIK…KQEE and NNEK…KGDD. Composition is skewed to low complexity over residues 508–521 and 677–696; these read EGNN…NNKE and RSNT…PKST. Basic and acidic residues-rich tracts occupy residues 697 to 713, 757 to 766, and 773 to 786; these read QPKE…EPRP, QNKEIDESLK, and MEKD…KNEE. 2 stretches are compositionally biased toward acidic residues: residues 800-820 and 839-865; these read DYDD…DFDG and EDSE…EESE.

It belongs to the TFIIIC subunit 5 family. Part of the TFIIIC complex.

The protein resides in the nucleus. Its function is as follows. Involved in RNA polymerase III-mediated transcription. Integral, tightly associated component of the DNA-binding TFIIIC2 subcomplex that directly binds tRNA and virus-associated RNA promoters. This Dictyostelium discoideum (Social amoeba) protein is General transcription factor 3C polypeptide 5 (gtf3c5).